Reading from the N-terminus, the 298-residue chain is Golgi to ER traffic protein 2 (298 aa).

Residues Met-1 to Leu-164 lie on the Cytoplasmic side of the membrane. The interval Ile-40–Ala-92 is disordered. Residues Ser-42–Val-55 are compositionally biased toward low complexity. A compositionally biased stretch (basic and acidic residues) spans Leu-56–Asp-67. A helical transmembrane segment spans residues Trp-165–Tyr-185. The Lumenal portion of the chain corresponds to Ile-186–Asp-211. Residues Phe-212–Phe-231 form a helical membrane-spanning segment. At His-232–Glu-275 the chain is on the cytoplasmic side. A helical membrane pass occupies residues Leu-276–Phe-296. At Ala-297–Asn-298 the chain is on the lumenal side.

Belongs to the GET2 family. As to quaternary structure, component of the Golgi to ER traffic (GET) complex, which is composed of GET1, GET2 and GET3. Within the complex, GET1 and GET2 form a heterotetramer which is stabilized by phosphatidylinositol binding and which binds to the GET3 homodimer.

It is found in the endoplasmic reticulum membrane. The protein localises to the golgi apparatus membrane. In terms of biological role, required for the post-translational delivery of tail-anchored (TA) proteins to the endoplasmic reticulum. Together with GET1, acts as a membrane receptor for soluble GET3, which recognizes and selectively binds the transmembrane domain of TA proteins in the cytosol. The GET complex cooperates with the HDEL receptor ERD2 to mediate the ATP-dependent retrieval of resident ER proteins that contain a C-terminal H-D-E-L retention signal from the Golgi to the ER. The protein is Golgi to ER traffic protein 2 of Candida albicans (strain SC5314 / ATCC MYA-2876) (Yeast).